A 75-amino-acid chain; its full sequence is Small ribosomal subunit protein eS17 (75 aa).

Belongs to the eukaryotic ribosomal protein eS17 family.

The sequence is that of Small ribosomal subunit protein eS17 from Thermoplasma volcanium (strain ATCC 51530 / DSM 4299 / JCM 9571 / NBRC 15438 / GSS1).